Consider the following 95-residue polypeptide: Aspartyl/glutamyl-tRNA(Asn/Gln) amidotransferase subunit C (95 aa).

Belongs to the GatC family. Heterotrimer of A, B and C subunits.

It carries out the reaction L-glutamyl-tRNA(Gln) + L-glutamine + ATP + H2O = L-glutaminyl-tRNA(Gln) + L-glutamate + ADP + phosphate + H(+). The catalysed reaction is L-aspartyl-tRNA(Asn) + L-glutamine + ATP + H2O = L-asparaginyl-tRNA(Asn) + L-glutamate + ADP + phosphate + 2 H(+). Its function is as follows. Allows the formation of correctly charged Asn-tRNA(Asn) or Gln-tRNA(Gln) through the transamidation of misacylated Asp-tRNA(Asn) or Glu-tRNA(Gln) in organisms which lack either or both of asparaginyl-tRNA or glutaminyl-tRNA synthetases. The reaction takes place in the presence of glutamine and ATP through an activated phospho-Asp-tRNA(Asn) or phospho-Glu-tRNA(Gln). In Jannaschia sp. (strain CCS1), this protein is Aspartyl/glutamyl-tRNA(Asn/Gln) amidotransferase subunit C.